The sequence spans 67 residues: MAQGTVKWFNAEKGFGFISTENGQDVFAHFSAIQTNGFKTLEEGQKVAFDVEEGQRGPQAVNITKLA.

The region spanning 4-63 is the CSD domain; that stretch reads GTVKWFNAEKGFGFISTENGQDVFAHFSAIQTNGFKTLEEGQKVAFDVEEGQRGPQAVNI.

In terms of assembly, homodimer.

It localises to the cytoplasm. This Streptococcus pyogenes serotype M3 (strain ATCC BAA-595 / MGAS315) protein is Major cold shock protein (cspA).